Consider the following 1496-residue polypeptide: Carbamoyl-phosphate synthase [ammonia], mitochondrial (1496 aa).

Residues methionine 1 to leucine 33 constitute a mitochondrion transit peptide. The interval methionine 34–valine 214 is anthranilate phosphoribosyltransferase homolog. One can recognise a Glutamine amidotransferase type-1 domain in the interval arginine 215–threonine 401. Residue cysteine 290 is the For GATase activity of the active site. ATP-grasp domains are found at residues serine 548 to leucine 740 and serine 1090 to isoleucine 1281. The MGS-like domain occupies phenylalanine 1352 to serine 1496. 6 residues coordinate N-acetyl-L-glutamate: threonine 1388, threonine 1391, tryptophan 1407, asparagine 1433, asparagine 1436, and asparagine 1445.

The protein resides in the mitochondrion. It catalyses the reaction hydrogencarbonate + NH4(+) + 2 ATP = carbamoyl phosphate + 2 ADP + phosphate + 2 H(+). With respect to regulation, requires N-acetyl-L-glutamate (NAG) as an allosteric activator. Involved in the urea cycle of ureotelic animals where the enzyme plays an important role in removing excess ammonia from the cell. The polypeptide is Carbamoyl-phosphate synthase [ammonia], mitochondrial (Aquarana catesbeiana (American bullfrog)).